The chain runs to 825 residues: Exocyst complex component SEC10a (825 aa).

A coiled-coil region spans residues 244-266 (RGLEVAVANLQDYCNELENRLLS).

The protein belongs to the SEC10 family. In terms of assembly, the exocyst complex is composed of SEC3, SEC5, SEC6, SEC8, SEC10, EXO70A1 and EXO84B. Interacts with EXO84B. Binds to EXO70E2. Binds directly to B1L. In terms of tissue distribution, expressed in seedlings, roots, leaves and flowers.

It localises to the cytoplasm. The protein localises to the cytosol. The protein resides in the secreted. It is found in the extracellular exosome. Component of the exocyst complex involved in the docking of exocytic vesicles with fusion sites on the plasma membrane during regulated or polarized secretion. Involved in polarized cell growth and organ morphogenesis. During cytokinesis, involved in cell plate initiation, cell plate maturation and formation of new primary cell wall. In Arabidopsis thaliana (Mouse-ear cress), this protein is Exocyst complex component SEC10a.